The primary structure comprises 591 residues: Protein NRT1/ PTR FAMILY 4.3 (591 aa).

The segment covering 1 to 10 (MAEINKQSNK) has biased composition (polar residues). A disordered region spans residues 1-38 (MAEINKQSNKWEQEEVSNENNWELAEEESVDWRGRPSN). 12 helical membrane passes run 47 to 67 (AALFVLGLQAFEIMGIAAVGN), 85 to 105 (ANIVTNFVGTIFIFALLGGYL), 109 to 129 (FLGSFWTIIIFGFVELSGFIL), 157 to 177 (GFKAMIFFMALYLVALGSGCV), 204 to 224 (FNAAYFAFSMGELIALTLLVW), 233 to 253 (IGFGVSAAAMTMGIISLVSGT), 347 to 367 (LISLVPIFASTIVFNTILAQL), 395 to 415 (AIPYIMLIFLVPLYDSFLVPF), 429 to 449 (LTRIGIGLFLSTFSMVSAAML), 463 to 483 (ILSIFWITPQFLIFGISEMFT), 502 to 522 (FLMALTYCSYSFGFYFSSVLV), and 551 to 571 (LFYWLLAVLSLLNFLSYLFWS).

This sequence belongs to the major facilitator superfamily. Proton-dependent oligopeptide transporter (POT/PTR) (TC 2.A.17) family. Expressed in flowers. Detected in roots and siliques.

It localises to the membrane. The sequence is that of Protein NRT1/ PTR FAMILY 4.3 (NPF4.3) from Arabidopsis thaliana (Mouse-ear cress).